A 175-amino-acid polypeptide reads, in one-letter code: uncharacterized protein (175 aa).

A signal peptide spans 1–33 (MERLPYEIVSTIFRKAILHYVLIRGTTYPQSLA).

This is an uncharacterized protein from Methanocaldococcus jannaschii (strain ATCC 43067 / DSM 2661 / JAL-1 / JCM 10045 / NBRC 100440) (Methanococcus jannaschii).